Here is a 204-residue protein sequence, read N- to C-terminus: Thymidylate kinase (204 aa).

Residue 7–14 (GGEGVGKT) participates in ATP binding.

This sequence belongs to the thymidylate kinase family.

The catalysed reaction is dTMP + ATP = dTDP + ADP. Functionally, phosphorylation of dTMP to form dTDP in both de novo and salvage pathways of dTTP synthesis. The protein is Thymidylate kinase of Synechococcus sp. (strain JA-3-3Ab) (Cyanobacteria bacterium Yellowstone A-Prime).